A 364-amino-acid chain; its full sequence is Serpentine receptor class epsilon-27 (364 aa).

7 helical membrane passes run 31-51 (VIAS…VVSL), 64-84 (FIIL…GKLI), 125-145 (LLII…FGAV), 167-187 (IFIP…CSCL), 195-215 (IITI…VFFL), 257-277 (LIFS…TLLL), and 290-310 (NALF…IPAW).

It belongs to the nematode receptor-like protein sre family.

Its subcellular location is the membrane. The polypeptide is Serpentine receptor class epsilon-27 (sre-27) (Caenorhabditis elegans).